The primary structure comprises 310 residues: Phosphoribosylaminoimidazole-succinocarboxamide synthase (310 aa).

The protein belongs to the SAICAR synthetase family.

It carries out the reaction 5-amino-1-(5-phospho-D-ribosyl)imidazole-4-carboxylate + L-aspartate + ATP = (2S)-2-[5-amino-1-(5-phospho-beta-D-ribosyl)imidazole-4-carboxamido]succinate + ADP + phosphate + 2 H(+). It participates in purine metabolism; IMP biosynthesis via de novo pathway; 5-amino-1-(5-phospho-D-ribosyl)imidazole-4-carboxamide from 5-amino-1-(5-phospho-D-ribosyl)imidazole-4-carboxylate: step 1/2. The chain is Phosphoribosylaminoimidazole-succinocarboxamide synthase from Xanthomonas oryzae pv. oryzae (strain MAFF 311018).